A 391-amino-acid polypeptide reads, in one-letter code: MTAPQTPSSNFLWFLPTHGDGHYLGTSNGGRDVNFGYLRQIAQAADQLGYFGVLLPTGRSCEDSWVVASAVAPWTERLRYLVAVRPGLQSPSVAARMTATLDRVIGGRLLVNVVTGGDPVENKGDGVFLSHDERYEVTREFLNVYSDLLSGKTVNVAGKHITIEDGRLLFPPVQSPRPPLYFGGSSDAGIDVAADTVDKYLTWGEPPAQVAEKVNRVRAVAEQRGRKLSFGIRLHVIVRETNEAAWAAADDLIRYVTDDTIAAAQKVFARMDSVGQQRMSELHGGRRDKLEISPNLWAGVGLVRGGAGTALVGDPQTVAARIKEYQDVGIDTFILSGYPHLEEAYRFAELVFPLVKSLHAGNVTPLRANTGPFGETIANEHLPNAKQAVKP.

It belongs to the SsuD family.

It catalyses the reaction an alkanesulfonate + FMNH2 + O2 = an aldehyde + FMN + sulfite + H2O + 2 H(+). Catalyzes the desulfonation of aliphatic sulfonates. In Rhodopseudomonas palustris (strain TIE-1), this protein is Alkanesulfonate monooxygenase.